A 328-amino-acid polypeptide reads, in one-letter code: Organic solute transporter alpha-like protein (328 aa).

Residues 1-44 are Extracellular-facing; that stretch reads MNASENYFTMDPTENISQVLDQNRNNTNSLRTHPTVEEYYENMT. Residues N2, N15, N25, and N42 are each glycosylated (N-linked (GlcNAc...) asparagine). The helical transmembrane segment at 45–65 threads the bilayer; the sequence is AFLSLAIFIASLLTILNISIF. The Cytoplasmic segment spans residues 66–84; it reads ATTVSRLRRHLDKPLLGPS. Residues 85–105 form a helical membrane-spanning segment; that stretch reads IMMVGLYPIISVAALVTILVP. Position 106 (Y106) is a topological domain, extracellular. The helical transmembrane segment at 107 to 127 threads the bilayer; the sequence is SWFICHTVMHVMFMVGGPVFR. Residues 128-177 are Cytoplasmic-facing; the sequence is TLLFRYVGSEQNYVKETAGEAVQLNTPPCCCCCLCLPMVIPTKAKLCISR. The chain crosses the membrane as a helical span at residues 178 to 198; that stretch reads YMVWQMPFWQGSIMLVMNILY. Residues 199-208 are Extracellular-facing; the sequence is YRDIQLYRQV. A helical membrane pass occupies residues 209–229; that stretch reads MFFFIPFIVCSIVLGAWSLQI. The Cytoplasmic segment spans residues 230–247; it reads TVRMITKVRGDYQLRKKM. A helical membrane pass occupies residues 248-265; the sequence is FCLQLVVMLCKLQYLVLY. Residues 266–287 are Extracellular-facing; it reads DQLDGIKMGGEYPINHTVYKQT. N280 carries an N-linked (GlcNAc...) asparagine glycan. A helical membrane pass occupies residues 288 to 308; that stretch reads IINILILVEMVLVSMMVQSAY. Residues 309 to 328 lie on the Cytoplasmic side of the membrane; that stretch reads RTPVQVQIDEVNKEKEVTRI.

It belongs to the OST-alpha family.

It is found in the cell membrane. Functionally, probable transporter. This Drosophila melanogaster (Fruit fly) protein is Organic solute transporter alpha-like protein.